We begin with the raw amino-acid sequence, 183 residues long: Streptavidin-V1 (183 aa).

A signal peptide spans 1 to 24 (MRKIVVAAIAVSLTTVSITASASA). The Avidin-like domain occupies 37–159 (AEAGITGTWY…GHDTFTKVKP (123 aa)). Residues tyrosine 67 and tyrosine 78 each contribute to the biotin site. The Cell attachment site; atypical signature appears at 83–85 (RYD). Biotin is bound by residues tryptophan 116, tryptophan 132, and tryptophan 144.

It belongs to the avidin/streptavidin family. Homotetramer.

It is found in the secreted. Its function is as follows. The biological function of streptavidin is not known. Forms a strong non-covalent specific complex with biotin (one molecule of biotin per subunit of streptavidin). In Streptomyces violaceus (Streptomyces venezuelae), this protein is Streptavidin-V1.